A 485-amino-acid polypeptide reads, in one-letter code: NGFI-A-binding protein 1 (485 aa).

Residues 4 to 82 are NCD1; the sequence is ALPRTLGELQ…RDWVTNPGLF (79 aa). Glycyl lysine isopeptide (Lys-Gly) (interchain with G-Cter in SUMO2) cross-links involve residues K126, K129, and K143. Residues 160–187 are disordered; it reads WQGHHATESEHSLSPADVGSPASPKESS. A phosphoserine mark is found at S171 and S182. K211 participates in a covalent cross-link: Glycyl lysine isopeptide (Lys-Gly) (interchain with G-Cter in SUMO2). An NCD2 region spans residues 220-309; sequence LLKNNKKLAK…ARQVSREVTY (90 aa). The necessary for nuclear localization stretch occupies residues 306-337; it reads EVTYKYTYRTTRLKCGERDELSPKRIKVEDGF. S327 carries the post-translational modification Phosphoserine. A Glycyl lysine isopeptide (Lys-Gly) (interchain with G-Cter in SUMO1); alternate cross-link involves residue K332. K332 is covalently cross-linked (Glycyl lysine isopeptide (Lys-Gly) (interchain with G-Cter in SUMO2); alternate). Glycyl lysine isopeptide (Lys-Gly) (interchain with G-Cter in SUMO2) cross-links involve residues K354, K368, and K372. A disordered region spans residues 398–432; that stretch reads RQSSGEHSPDGLPSDGSDGQGERPLNLRMPNVQNR. A Phosphoserine modification is found at S405. Residues K452, K463, and K475 each participate in a glycyl lysine isopeptide (Lys-Gly) (interchain with G-Cter in SUMO2) cross-link. K478 participates in a covalent cross-link: Glycyl lysine isopeptide (Lys-Gly) (interchain with G-Cter in SUMO1); alternate. A Glycyl lysine isopeptide (Lys-Gly) (interchain with G-Cter in SUMO2); alternate cross-link involves residue K478.

It belongs to the NAB family. Homomultimers may associate with EGR1 bound to DNA.

The protein localises to the nucleus. In terms of biological role, acts as a transcriptional repressor for zinc finger transcription factors EGR1 and EGR2. This is NGFI-A-binding protein 1 (NAB1) from Mesocricetus auratus (Golden hamster).